The primary structure comprises 504 residues: Glutamate--tRNA ligase (504 aa).

The 'HIGH' region signature appears at 10–20 (PSPTGDPHVGT). The 'KMSKS' region signature appears at 251 to 255 (KLSKR). Lys254 is an ATP binding site.

The protein belongs to the class-I aminoacyl-tRNA synthetase family. Glutamate--tRNA ligase type 1 subfamily. In terms of assembly, monomer.

The protein localises to the cytoplasm. The enzyme catalyses tRNA(Glu) + L-glutamate + ATP = L-glutamyl-tRNA(Glu) + AMP + diphosphate. Functionally, catalyzes the attachment of glutamate to tRNA(Glu) in a two-step reaction: glutamate is first activated by ATP to form Glu-AMP and then transferred to the acceptor end of tRNA(Glu). This chain is Glutamate--tRNA ligase, found in Cellvibrio japonicus (strain Ueda107) (Pseudomonas fluorescens subsp. cellulosa).